The chain runs to 905 residues: MISSKVAPGEEEEQQEAPAEVAPAEEELRETEGQLEAVPPDEASPSWATGPPLERLPPVGQEAPPPRRCHTDCLEAPLSSCFLRLGALVGANPWLFLLGPVLLTASLGTGLIFLPKEKENLEEQYTPIGSPAKAERRFVQSHFSTNDSYRFSASRTSSETNFASILVVSHRDSLLEPEAFAEVSRLDRAVQALKVVQENGTQILYPEVCAKYSVGCVPPNPLLFSWQQNSSLNLSELTFPIHSVADHLIHLAGFFGGNVLGYATTGNRQRLVESRAMRLLYYLKTEDPEDRERSQAWLTHFLDHFNDMKSDLALEDIEVVYFTSLSRQLEFEATSKTVIPLFHLAYILIILFAVVSCSRLDCIRNKMWVAVFGVFSVAMSVVSGFGLMLHIGVPFVIIVANSPFLILGVGVDDMFIMISAWQKTSLTESVSERLSNSYSKVAVSITITTITNVLAFYTGITSSFRSVQYFCIYTGTTLLFCYFYSITCFGAIMALDGKREVVWSRWLEKPDQKYSSFKKFCCVPFGSFPDEHGDDNHPMNLFFRDYFGPFLTTSKAKFIVVLIYIFYIISSIYGCFQVQEGLDLRNLASDDSYITPYFNVEEDYFSDYGPRVMVIVTETVNYWDKDVRQKLDKCMTQFEQNEYVDKNLTEFWLEAYMQYMNNTGNNPNDKNTFMNNIAGFLNFFPVFTYDINVSSSNEITSSRGFIQTIDVSSSSNKKRMLLKLRGIAENCEVPLMVYNQAFIYFDQYAAIIENTVRNVMIASTAMFIVSLLLIPHPVCSLWVTFAIASVIVGVTGFMAFWNVNLDSISMINLVICIGFSFDFSAHISYAFVSSNEPSVNKKSIEALYLLGYPVLQSAISTIIGVCVLAAAKAYIFRTFFKIMFLVMFFGAAHGLIFIPVFLTFF.

The disordered stretch occupies residues 1-67 (MISSKVAPGE…PVGQEAPPPR (67 aa)). A helical membrane pass occupies residues 94-114 (WLFLLGPVLLTASLGTGLIFL). Residues asparagine 146, asparagine 199, asparagine 229, and asparagine 233 are each glycosylated (N-linked (GlcNAc...) asparagine). 6 consecutive transmembrane segments (helical) span residues 337 to 357 (TVIP…VVSC), 369 to 389 (VAVF…GLML), 391 to 411 (IGVP…GVGV), 441 to 461 (VAVS…TGIT), 475 to 495 (GTTL…IMAL), and 558 to 578 (FIVV…CFQV). The 158-residue stretch at 338 to 495 (VIPLFHLAYI…ITCFGAIMAL (158 aa)) folds into the SSD domain. Asparagine 647, asparagine 661, and asparagine 692 each carry an N-linked (GlcNAc...) asparagine glycan. The next 5 helical transmembrane spans lie at 759-779 (VMIA…HPVC), 781-801 (LWVT…MAFW), 813-833 (LVIC…AFVS), 849-869 (LLGY…CVLA), and 882-902 (IMFL…PVFL).

This sequence belongs to the patched family. Expressed in germ cells of the testis (at protein level).

The protein localises to the cell projection. It is found in the cilium. It localises to the flagellum membrane. The protein resides in the endoplasmic reticulum membrane. May play a role in sperm development or sperm function. However, does not appear to have an essential role in spermatogenesis or male fertility. The protein is Patched domain-containing protein 3 of Rattus norvegicus (Rat).